The chain runs to 198 residues: ATP-dependent Clp protease proteolytic subunit (198 aa).

Ser98 serves as the catalytic Nucleophile. His123 is a catalytic residue.

Belongs to the peptidase S14 family. In terms of assembly, fourteen ClpP subunits assemble into 2 heptameric rings which stack back to back to give a disk-like structure with a central cavity, resembling the structure of eukaryotic proteasomes.

The protein resides in the cytoplasm. It catalyses the reaction Hydrolysis of proteins to small peptides in the presence of ATP and magnesium. alpha-casein is the usual test substrate. In the absence of ATP, only oligopeptides shorter than five residues are hydrolyzed (such as succinyl-Leu-Tyr-|-NHMec, and Leu-Tyr-Leu-|-Tyr-Trp, in which cleavage of the -Tyr-|-Leu- and -Tyr-|-Trp bonds also occurs).. Functionally, cleaves peptides in various proteins in a process that requires ATP hydrolysis. Has a chymotrypsin-like activity. Plays a major role in the degradation of misfolded proteins. The chain is ATP-dependent Clp protease proteolytic subunit from Ehrlichia ruminantium (strain Welgevonden).